The sequence spans 87 residues: Conotoxin Cl12.3 (87 aa).

A signal peptide spans 1 to 19; sequence MKLTCVLVVLLLFLPYGDL. The propeptide occupies 20–42; it reads ITNNYIGGAARKVTPWRRNLKTR.

The protein belongs to the conotoxin O1 superfamily. Contains 4 disulfide bonds. In terms of tissue distribution, expressed by the venom duct.

It localises to the secreted. The sequence is that of Conotoxin Cl12.3 from Californiconus californicus (California cone).